A 95-amino-acid chain; its full sequence is Putative monooxygenase YcnE (95 aa).

In terms of domain architecture, ABM spans 2–93 (IVLQAYIKVK…APLDVVRTEL (92 aa)). Position 24 is a phosphoserine (Ser-24).

Belongs to the LsrG family.

Functionally, putative monooxygenase that may contribute to the degradation of aromatic compounds. The protein is Putative monooxygenase YcnE (ycnE) of Bacillus subtilis (strain 168).